Here is a 710-residue protein sequence, read N- to C-terminus: WD repeat-containing protein CG11141 (710 aa).

WD repeat units follow at residues 31–70 (FFPA…MQKL) and 133–172 (LHKC…HLSK). Residues 283–307 (LNPKQRSEPSGTHHTSASTSSTRHS) form a disordered region. The span at 292-307 (SGTHHTSASTSSTRHS) shows a compositional bias: low complexity. Threonine 488 is modified (phosphothreonine). A Phosphoserine modification is found at serine 553. Disordered stretches follow at residues 612 to 635 (ASIQ…GEPV) and 685 to 710 (DPLA…FLDN). Composition is skewed to polar residues over residues 613-624 (SIQTSSRENATN) and 694-704 (PATSDSNTSSE).

Belongs to the WD repeat KIAA0329 family.

This chain is WD repeat-containing protein CG11141, found in Drosophila melanogaster (Fruit fly).